The sequence spans 359 residues: DNA replication and repair protein RecF (359 aa).

An ATP-binding site is contributed by 30 to 37 (GPNGSGKT).

It belongs to the RecF family.

It localises to the cytoplasm. In terms of biological role, the RecF protein is involved in DNA metabolism; it is required for DNA replication and normal SOS inducibility. RecF binds preferentially to single-stranded, linear DNA. It also seems to bind ATP. The sequence is that of DNA replication and repair protein RecF from Aliivibrio fischeri (strain ATCC 700601 / ES114) (Vibrio fischeri).